The primary structure comprises 61 residues: Translational regulator CsrA (61 aa).

Belongs to the CsrA/RsmA family. Homodimer; the beta-strands of each monomer intercalate to form a hydrophobic core, while the alpha-helices form wings that extend away from the core.

Its subcellular location is the cytoplasm. In terms of biological role, a key translational regulator that binds mRNA to regulate translation initiation and/or mRNA stability. Mediates global changes in gene expression, shifting from rapid growth to stress survival by linking envelope stress, the stringent response and the catabolite repression systems. Usually binds in the 5'-UTR; binding at or near the Shine-Dalgarno sequence prevents ribosome-binding, repressing translation, binding elsewhere in the 5'-UTR can activate translation and/or stabilize the mRNA. Its function is antagonized by small RNA(s). In Actinobacillus succinogenes (strain ATCC 55618 / DSM 22257 / CCUG 43843 / 130Z), this protein is Translational regulator CsrA.